The sequence spans 592 residues: A-type ATP synthase subunit A (592 aa).

231–238 lines the ATP pocket; that stretch reads GGFGTGKT.

The protein belongs to the ATPase alpha/beta chains family. Has multiple subunits with at least A(3), B(3), C, D, E, F, H, I and proteolipid K(x).

Its subcellular location is the cell membrane. It catalyses the reaction ATP + H2O + 4 H(+)(in) = ADP + phosphate + 5 H(+)(out). Component of the A-type ATP synthase that produces ATP from ADP in the presence of a proton gradient across the membrane. The A chain is the catalytic subunit. The chain is A-type ATP synthase subunit A from Staphylothermus marinus (strain ATCC 43588 / DSM 3639 / JCM 9404 / F1).